A 214-amino-acid chain; its full sequence is 3-isopropylmalate dehydratase small subunit (214 aa).

It belongs to the LeuD family. LeuD type 1 subfamily. As to quaternary structure, heterodimer of LeuC and LeuD.

It carries out the reaction (2R,3S)-3-isopropylmalate = (2S)-2-isopropylmalate. It functions in the pathway amino-acid biosynthesis; L-leucine biosynthesis; L-leucine from 3-methyl-2-oxobutanoate: step 2/4. In terms of biological role, catalyzes the isomerization between 2-isopropylmalate and 3-isopropylmalate, via the formation of 2-isopropylmaleate. The chain is 3-isopropylmalate dehydratase small subunit from Pseudomonas fluorescens (strain ATCC BAA-477 / NRRL B-23932 / Pf-5).